The chain runs to 500 residues: Squalene epoxidase ERG1 (500 aa).

Residues 20–40 (EADVVVVGAGVFGCTMAFALA) form a helical membrane-spanning segment. FAD is bound by residues 30-31 (VF), 50-51 (ER), Arg-58, Arg-145, Asp-332, and Met-345. A run of 2 helical transmembrane segments spans residues 450–470 (AFLA…LGIF) and 474–494 (LAII…IPIM).

The protein belongs to the squalene monooxygenase family. It depends on FAD as a cofactor.

It is found in the microsome membrane. Its subcellular location is the endoplasmic reticulum membrane. It localises to the lipid droplet. It catalyses the reaction squalene + reduced [NADPH--hemoprotein reductase] + O2 = (S)-2,3-epoxysqualene + oxidized [NADPH--hemoprotein reductase] + H2O + H(+). Its pathway is terpene metabolism; lanosterol biosynthesis; lanosterol from farnesyl diphosphate: step 2/3. The protein operates within steroid metabolism; ergosterol biosynthesis. Functionally, squalene epoxidase; part of the third module of ergosterol biosynthesis pathway that includes the late steps of the pathway. ERG1 catalyzes the epoxidation of squalene into 2,3-epoxysqualene. The third module or late pathway involves the ergosterol synthesis itself through consecutive reactions that mainly occur in the endoplasmic reticulum (ER) membrane. Firstly, the squalene synthase ERG9 catalyzes the condensation of 2 farnesyl pyrophosphate moieties to form squalene, which is the precursor of all steroids. Squalene synthase is crucial for balancing the incorporation of farnesyl diphosphate (FPP) into sterol and nonsterol isoprene synthesis. Secondly, squalene is converted into lanosterol by the consecutive action of the squalene epoxidase ERG1 and the lanosterol synthase ERG7. Then, the delta(24)-sterol C-methyltransferase ERG6 methylates lanosterol at C-24 to produce eburicol. Eburicol is the substrate of the sterol 14-alpha demethylase encoded by CYP51A, CYP51B and CYP51C, to yield 4,4,24-trimethyl ergosta-8,14,24(28)-trienol. CYP51B encodes the enzyme primarily responsible for sterol 14-alpha-demethylation, and plays an essential role in ascospore formation. CYP51A encodes an additional sterol 14-alpha-demethylase, induced on ergosterol depletion and responsible for the intrinsic variation in azole sensitivity. The third CYP51 isoform, CYP51C, does not encode a sterol 14-alpha-demethylase, but is required for full virulence on host wheat ears. The C-14 reductase ERG24 then reduces the C14=C15 double bond which leads to 4,4-dimethylfecosterol. A sequence of further demethylations at C-4, involving the C-4 demethylation complex containing the C-4 methylsterol oxidases ERG25, the sterol-4-alpha-carboxylate 3-dehydrogenase ERG26 and the 3-keto-steroid reductase ERG27, leads to the production of fecosterol via 4-methylfecosterol. ERG28 has a role as a scaffold to help anchor ERG25, ERG26 and ERG27 to the endoplasmic reticulum. The C-8 sterol isomerase ERG2 then catalyzes the reaction which results in unsaturation at C-7 in the B ring of sterols and thus converts fecosterol to episterol. The sterol-C5-desaturases ERG3A and ERG3BB then catalyze the introduction of a C-5 double bond in the B ring to produce 5-dehydroepisterol. The C-22 sterol desaturases ERG5A and ERG5B further convert 5-dehydroepisterol into ergosta-5,7,22,24(28)-tetraen-3beta-ol by forming the C-22(23) double bond in the sterol side chain. Finally, ergosta-5,7,22,24(28)-tetraen-3beta-ol is substrate of the C-24(28) sterol reductase ERG4 to produce ergosterol. The protein is Squalene epoxidase ERG1 of Gibberella zeae (strain ATCC MYA-4620 / CBS 123657 / FGSC 9075 / NRRL 31084 / PH-1) (Wheat head blight fungus).